We begin with the raw amino-acid sequence, 323 residues long: NADH-ubiquinone oxidoreductase chain 1 (323 aa).

8 helical membrane-spanning segments follow: residues 8–28, 74–94, 105–125, 150–170, 176–196, 227–247, 258–278, and 298–318; these read LLNPLAVIIPILLAVAFLTLI, LLFITTPMLALTMALTLWLPL, LGMLFILAISSLTVYSILGSG, SLGLILLAMIIFAGGFTLTTF, TIWLLTPGWPLAAMWYISTLA, LFFLAEYANILLMNTLSTILF, ELTSINLMIKASALSMLFLWV, and FLPITLAMILWHTSLPIFTGS.

Belongs to the complex I subunit 1 family.

Its subcellular location is the mitochondrion inner membrane. It carries out the reaction a ubiquinone + NADH + 5 H(+)(in) = a ubiquinol + NAD(+) + 4 H(+)(out). In terms of biological role, core subunit of the mitochondrial membrane respiratory chain NADH dehydrogenase (Complex I) that is believed to belong to the minimal assembly required for catalysis. Complex I functions in the transfer of electrons from NADH to the respiratory chain. The immediate electron acceptor for the enzyme is believed to be ubiquinone. The protein is NADH-ubiquinone oxidoreductase chain 1 (MT-ND1) of Latimeria chalumnae (Coelacanth).